The chain runs to 142 residues: Baculoviral IAP repeat-containing protein 5 (142 aa).

The stretch at 18 to 88 is one BIR repeat; the sequence is RVSTFKNWPF…KHSSGCAFLS (71 aa). Ser20 is modified (phosphoserine; by AURKC). N6-acetyllysine is present on Lys23. Position 34 is a phosphothreonine; by CDK1 and CDK15 (Thr34). The residue at position 48 (Thr48) is a Phosphothreonine. 4 residues coordinate Zn(2+): Cys57, Cys60, His77, and Cys84. N6-acetyllysine is present on residues Lys90, Lys110, Lys112, and Lys115. Phosphothreonine; by AURKB is present on Thr117. Lys129 carries the N6-acetyllysine modification.

Belongs to the IAP family. As to quaternary structure, monomer or homodimer. Exists as a homodimer in the apo state and as a monomer in the CPC-bound state. The monomer protects cells against apoptosis more efficiently than the dimer. Only the dimeric form is capable of enhancing tubulin stability in cells. When phosphorylated, interacts with LAMTOR5/HBXIP; the resulting complex binds pro-CASP9, as well as active CASP9, but much less efficiently. Component of the chromosomal passenger complex (CPC) composed of at least BIRC5/survivin, CDCA8/borealin, INCENP, AURKB or AURKC; in the complex forms a triple-helix bundle-based subcomplex with INCENP and CDCA8. Interacts with JTB. Interacts (via BIR domain) with histone H3 phosphorylated at 'Thr-3' (H3pT3). Interacts with EVI5. Interacts with GTP-bound RAN in both the S and M phases of the cell cycle. Interacts with USP9X. Interacts with tubulin. Interacts with BIRC2/c-IAP1. The acetylated form at Lys-129 interacts with STAT3. The monomeric form deacetylated at Lys-129 interacts with XPO1/CRM1. The monomeric form interacts with XIAP/BIRC4. Both the dimeric and monomeric form can interact with DIABLO/SMAC. Interacts with BIRC6/bruce. Interacts with FBXL7; this interaction facilitates the polyubiquitination and subsequent proteasomal degradation of BIRC5 by the SCF(FBXL7) E3 ubiquitin-protein ligase complex. Post-translationally, ubiquitinated by the Cul9-RING ubiquitin-protein ligase complex, leading to its degradation. Ubiquitination is required for centrosomal targeting. Deubiquitinated by USP35 or USP38; leading to stabilization. Acetylation at Lys-129 results in its homodimerization, while deacetylation promotes the formation of monomers which heterodimerize with XPO1/CRM1 which facilitates its nuclear export. The acetylated form represses STAT3 transactivation. The dynamic equilibrium between its acetylation and deacetylation at Lys-129 determines its interaction with XPO1/CRM1, its subsequent subcellular localization, and its ability to inhibit STAT3 transactivation. In terms of processing, in vitro phosphorylation at Thr-117 by AURKB prevents interaction with INCENP and localization to mitotic chromosomes. Phosphorylation at Thr-48 by CK2 is critical for its mitotic and anti-apoptotic activities. Phosphorylation at Thr-34 by CDK15 is critical for its anti-apoptotic activity. Phosphorylation at Ser-20 by AURKC is critical for regulation of proper chromosome alignment and segregation, and possibly cytokinesis.

It localises to the cytoplasm. The protein resides in the nucleus. It is found in the chromosome. Its subcellular location is the centromere. The protein localises to the cytoskeleton. It localises to the spindle. The protein resides in the kinetochore. It is found in the midbody. Its function is as follows. Multitasking protein that has dual roles in promoting cell proliferation and preventing apoptosis. Component of a chromosome passage protein complex (CPC) which is essential for chromosome alignment and segregation during mitosis and cytokinesis. Acts as an important regulator of the localization of this complex; directs CPC movement to different locations from the inner centromere during prometaphase to midbody during cytokinesis and participates in the organization of the center spindle by associating with polymerized microtubules. Involved in the recruitment of CPC to centromeres during early mitosis via association with histone H3 phosphorylated at 'Thr-3' (H3pT3) during mitosis. The complex with RAN plays a role in mitotic spindle formation by serving as a physical scaffold to help deliver the RAN effector molecule TPX2 to microtubules. May counteract a default induction of apoptosis in G2/M phase. The acetylated form represses STAT3 transactivation of target gene promoters. May play a role in neoplasia. Inhibitor of CASP3 and CASP7. Essential for the maintenance of mitochondrial integrity and function. The chain is Baculoviral IAP repeat-containing protein 5 (BIRC5) from Canis lupus familiaris (Dog).